We begin with the raw amino-acid sequence, 366 residues long: Phospho-N-acetylmuramoyl-pentapeptide-transferase (366 aa).

Helical transmembrane passes span 27–47, 71–91, 93–113, 138–158, 174–194, 205–225, 245–265, 268–288, 297–317, and 343–363; these read AALFTSALIVFLFGPAMIASL, TPTMGGLMILTGIVVSSLLWA, LSSIYVVSTLLVTLGFGAIGF, FVIAAVAVFFMMQAALSAGAA, LMLNLGYFFVLFGGFVIVGAG, GLAIVPVMIASAAFGLIAYLA, LAVILGAVIGAGLGFLWFNAP, AIFMGDTGSLALGGLIGTVAV, IIIGGLFVIETLSVIIQVFWF, and QVVIRFWIIAVILAMVGLSTL.

It belongs to the glycosyltransferase 4 family. MraY subfamily. Mg(2+) serves as cofactor.

It localises to the cell inner membrane. It carries out the reaction UDP-N-acetyl-alpha-D-muramoyl-L-alanyl-gamma-D-glutamyl-meso-2,6-diaminopimeloyl-D-alanyl-D-alanine + di-trans,octa-cis-undecaprenyl phosphate = di-trans,octa-cis-undecaprenyl diphospho-N-acetyl-alpha-D-muramoyl-L-alanyl-D-glutamyl-meso-2,6-diaminopimeloyl-D-alanyl-D-alanine + UMP. The protein operates within cell wall biogenesis; peptidoglycan biosynthesis. Functionally, catalyzes the initial step of the lipid cycle reactions in the biosynthesis of the cell wall peptidoglycan: transfers peptidoglycan precursor phospho-MurNAc-pentapeptide from UDP-MurNAc-pentapeptide onto the lipid carrier undecaprenyl phosphate, yielding undecaprenyl-pyrophosphoryl-MurNAc-pentapeptide, known as lipid I. This is Phospho-N-acetylmuramoyl-pentapeptide-transferase from Rhizobium meliloti (strain 1021) (Ensifer meliloti).